A 720-amino-acid polypeptide reads, in one-letter code: Secreted RxLR effector protein 138 (720 aa).

An N-terminal signal peptide occupies residues 1–20 (MRSAFYVAIVLLVAAGSQTA). The RxLR-dEER motif lies at 56 to 71 (RNLKDDFMFSAGDEER). The segment at 264 to 335 (ESNTRKRNNV…VAPPEPSRLD (72 aa)) is disordered. The segment covering 320–335 (KQHDHRVAPPEPSRLD) has biased composition (basic and acidic residues). N-linked (GlcNAc...) asparagine glycosylation is present at N609.

The protein belongs to the RxLR effector family.

The protein resides in the secreted. Its subcellular location is the host nucleus. Secreted effector that acts as an elicitor that induces cell death in host plant cells. In Plasmopara viticola (Downy mildew of grapevine), this protein is Secreted RxLR effector protein 138.